The primary structure comprises 215 residues: MAVIYNWFNDRLEIQAVADDITAKYVPPHVNLFYCLGGITLTCFLIQVATGFALTFYYRPTVGEALSSVRSIMLDTNFGWLIRSVHRWCASMMVLMMVLHVFRVYLTGGFKNPRESTWVTGVIMASCTVSFGVTGYSLPWDQVGYWAVKIVTGVPEAIPVIGPAIVQLLRGNSSVGQATLTRFYSLHTFVLPLLTAVFMLGHFLMIRKQGISGPL.

A helical membrane pass occupies residues 32 to 52 (LFYCLGGITLTCFLIQVATGF). Cys-35 is a heme c binding site. Positions 86 and 100 each coordinate heme b. A run of 3 helical transmembrane segments spans residues 90–110 (ASMM…TGGF), 116–136 (STWV…VTGY), and 186–206 (LHTF…FLMI). His-187 and His-202 together coordinate heme b.

This sequence belongs to the cytochrome b family. PetB subfamily. In terms of assembly, the 4 large subunits of the cytochrome b6-f complex are cytochrome b6, subunit IV (17 kDa polypeptide, PetD), cytochrome f and the Rieske protein, while the 4 small subunits are PetG, PetL, PetM and PetN. The complex functions as a dimer. Heme b is required as a cofactor. The cofactor is heme c.

It localises to the plastid. Its subcellular location is the chloroplast thylakoid membrane. In terms of biological role, component of the cytochrome b6-f complex, which mediates electron transfer between photosystem II (PSII) and photosystem I (PSI), cyclic electron flow around PSI, and state transitions. The chain is Cytochrome b6 from Bigelowiella natans (Pedinomonas minutissima).